Consider the following 132-residue polypeptide: Small ribosomal subunit protein uS8c (132 aa).

Belongs to the universal ribosomal protein uS8 family. In terms of assembly, part of the 30S ribosomal subunit.

Its subcellular location is the plastid. It is found in the chloroplast. In terms of biological role, one of the primary rRNA binding proteins, it binds directly to 16S rRNA central domain where it helps coordinate assembly of the platform of the 30S subunit. This chain is Small ribosomal subunit protein uS8c (rps8), found in Nandina domestica (Heavenly bamboo).